The following is a 221-amino-acid chain: uncharacterized protein (221 aa).

The 189-residue stretch at 1–189 (MDSGKDTNGY…NVVYCSEKAV (189 aa)) folds into the Peptidase S8 domain.

This sequence belongs to the peptidase S8 family.

This is an uncharacterized protein from Aquifex aeolicus (strain VF5).